Reading from the N-terminus, the 339-residue chain is Ribosomal RNA large subunit methyltransferase M (339 aa).

S-adenosyl-L-methionine-binding positions include S176, 206 to 209 (APGG), D225, D245, and D261. K290 functions as the Proton acceptor in the catalytic mechanism.

The protein belongs to the class I-like SAM-binding methyltransferase superfamily. RNA methyltransferase RlmE family. RlmM subfamily. As to quaternary structure, monomer.

Its subcellular location is the cytoplasm. The catalysed reaction is cytidine(2498) in 23S rRNA + S-adenosyl-L-methionine = 2'-O-methylcytidine(2498) in 23S rRNA + S-adenosyl-L-homocysteine + H(+). Catalyzes the 2'-O-methylation at nucleotide C2498 in 23S rRNA. The sequence is that of Ribosomal RNA large subunit methyltransferase M from Halorhodospira halophila (strain DSM 244 / SL1) (Ectothiorhodospira halophila (strain DSM 244 / SL1)).